The sequence spans 373 residues: 3-isopropylmalate dehydrogenase (373 aa).

82 to 93 (GPKWGTGAVRPE) provides a ligand contact to NAD(+). Substrate-binding residues include Arg-100, Arg-110, Arg-139, and Asp-231. Asp-231 and Asp-260 together coordinate Mg(2+). Residue 295–306 (GSAPDLPENKVN) coordinates NAD(+).

It belongs to the isocitrate and isopropylmalate dehydrogenases family. As to quaternary structure, homodimer. Mg(2+) is required as a cofactor. Requires Mn(2+) as cofactor.

It localises to the cytoplasm. It catalyses the reaction (2R,3S)-3-isopropylmalate + NAD(+) = 4-methyl-2-oxopentanoate + CO2 + NADH. The protein operates within amino-acid biosynthesis; L-leucine biosynthesis; L-leucine from 3-methyl-2-oxobutanoate: step 3/4. Catalyzes the oxidation of 3-carboxy-2-hydroxy-4-methylpentanoate (3-isopropylmalate) to 3-carboxy-4-methyl-2-oxopentanoate. The product decarboxylates to 4-methyl-2 oxopentanoate. The chain is 3-isopropylmalate dehydrogenase (LEU2) from Scheffersomyces stipitis (strain ATCC 58785 / CBS 6054 / NBRC 10063 / NRRL Y-11545) (Yeast).